The following is a 65-amino-acid chain: Large ribosomal subunit protein bL35 (65 aa).

The tract at residues 1 to 26 (MPKIKTVRGAAKRFKKTASGGFKRKQ) is disordered. The segment covering 10–26 (AAKRFKKTASGGFKRKQ) has biased composition (basic residues).

Belongs to the bacterial ribosomal protein bL35 family.

The polypeptide is Large ribosomal subunit protein bL35 (Mannheimia succiniciproducens (strain KCTC 0769BP / MBEL55E)).